Reading from the N-terminus, the 363-residue chain is Aminomethyltransferase (363 aa).

It belongs to the GcvT family. As to quaternary structure, the glycine cleavage system is composed of four proteins: P, T, L and H.

It catalyses the reaction N(6)-[(R)-S(8)-aminomethyldihydrolipoyl]-L-lysyl-[protein] + (6S)-5,6,7,8-tetrahydrofolate = N(6)-[(R)-dihydrolipoyl]-L-lysyl-[protein] + (6R)-5,10-methylene-5,6,7,8-tetrahydrofolate + NH4(+). In terms of biological role, the glycine cleavage system catalyzes the degradation of glycine. The sequence is that of Aminomethyltransferase from Nitrosomonas eutropha (strain DSM 101675 / C91 / Nm57).